A 402-amino-acid chain; its full sequence is Phosphoglycerate kinase (402 aa).

Residues 24–26 (DFN), R40, 63–66 (HFGR), R122, and R155 each bind substrate. Residues K206, G297, E328, and 358-361 (GGDS) each bind ATP.

Belongs to the phosphoglycerate kinase family. As to quaternary structure, monomer.

It localises to the cytoplasm. The catalysed reaction is (2R)-3-phosphoglycerate + ATP = (2R)-3-phospho-glyceroyl phosphate + ADP. It participates in carbohydrate degradation; glycolysis; pyruvate from D-glyceraldehyde 3-phosphate: step 2/5. The protein is Phosphoglycerate kinase of Prochlorococcus marinus (strain MIT 9515).